The primary structure comprises 178 residues: Twist-related protein (178 aa).

Residues 20 to 71 (QQRACANRRERQRTKELNDAFTLLRKLIPSMPSDKMSKIHTLRIATDYISFL) form the bHLH domain.

In terms of assembly, efficient DNA binding requires dimerization with another bHLH protein. Homodimer. Forms a heterodimer with hlh-2. In terms of tissue distribution, expressed in defecation-associated muscles and neuron-like cells in the head at the L1 stage. In later larvae, expressed in SM cells and their descendants. Not expressed in differentiated body wall or sex muscles.

It localises to the nucleus. In terms of biological role, acts as a transcriptional regulator. Involved in postembryonic mesodermal cell fate specification. Activates ceh-24 and egl-15 during mesodermal patterning. The sequence is that of Twist-related protein (hlh-8) from Caenorhabditis elegans.